The primary structure comprises 398 residues: MTNSPRTAAIIVAAGRGLRAGAGGPKQYRTLAGRPVIARAMEPFCTHPGVMAVQPVTNPDDTEMFNAAVAGLNFRPAVGGGATRQASVRAGLEALAELKPDIVLIHDAARCFVTPELISRAITAAGATGAALPVVAVTDTIKQVDSSGAVDATPDRASLRIAQTPQAFRFDVILDAHRRAASGGRDDFTDDAAIAEWAGLTVSTFEGDANNMKMTTPEDFAREESRLMAALGDIRTGTGYDVHAFGEGDHVWLCGLKVPHTRGFLAHSDGDVGLHALVDAILGALADGDIGSHFPPTDPQWKGAASDKFLKYAIDRVTARGGRVANLEVTMICERPKIGPLRDAMRQRIAEITGVPVSRVAVKATTSEKLGFTGREEGIAATASATIRLPWGADGLAG.

Positions 1 to 234 are 2-C-methyl-D-erythritol 4-phosphate cytidylyltransferase; the sequence is MTNSPRTAAI…SRLMAALGDI (234 aa). The interval 235-398 is 2-C-methyl-D-erythritol 2,4-cyclodiphosphate synthase; it reads RTGTGYDVHA…LPWGADGLAG (164 aa). D241 and H243 together coordinate a divalent metal cation. 4-CDP-2-C-methyl-D-erythritol 2-phosphate-binding positions include 241–243 and 267–268; these read DVH and HS. H275 is an a divalent metal cation binding site. Residues 289–291, 365–368, F372, and R375 each bind 4-CDP-2-C-methyl-D-erythritol 2-phosphate; these read DIG and TTSE.

It in the N-terminal section; belongs to the IspD/TarI cytidylyltransferase family. IspD subfamily. The protein in the C-terminal section; belongs to the IspF family. It depends on a divalent metal cation as a cofactor.

It catalyses the reaction 2-C-methyl-D-erythritol 4-phosphate + CTP + H(+) = 4-CDP-2-C-methyl-D-erythritol + diphosphate. It carries out the reaction 4-CDP-2-C-methyl-D-erythritol 2-phosphate = 2-C-methyl-D-erythritol 2,4-cyclic diphosphate + CMP. It participates in isoprenoid biosynthesis; isopentenyl diphosphate biosynthesis via DXP pathway; isopentenyl diphosphate from 1-deoxy-D-xylulose 5-phosphate: step 2/6. Its pathway is isoprenoid biosynthesis; isopentenyl diphosphate biosynthesis via DXP pathway; isopentenyl diphosphate from 1-deoxy-D-xylulose 5-phosphate: step 4/6. In terms of biological role, bifunctional enzyme that catalyzes the formation of 4-diphosphocytidyl-2-C-methyl-D-erythritol from CTP and 2-C-methyl-D-erythritol 4-phosphate (MEP) (IspD), and catalyzes the conversion of 4-diphosphocytidyl-2-C-methyl-D-erythritol 2-phosphate (CDP-ME2P) to 2-C-methyl-D-erythritol 2,4-cyclodiphosphate (ME-CPP) with a corresponding release of cytidine 5-monophosphate (CMP) (IspF). In Rhodopseudomonas palustris (strain TIE-1), this protein is Bifunctional enzyme IspD/IspF.